We begin with the raw amino-acid sequence, 101 residues long: Integration host factor subunit beta (101 aa).

It belongs to the bacterial histone-like protein family. As to quaternary structure, heterodimer of an alpha and a beta chain.

Functionally, this protein is one of the two subunits of integration host factor, a specific DNA-binding protein that functions in genetic recombination as well as in transcriptional and translational control. This chain is Integration host factor subunit beta, found in Maricaulis maris (strain MCS10) (Caulobacter maris).